An 86-amino-acid chain; its full sequence is Envelope glycoprotein N (86 aa).

The first 29 residues, Met-1 to Gly-29, serve as a signal peptide directing secretion. Residues Glu-30 to Leu-47 are Virion surface-facing. The helical transmembrane segment at Lys-48–Leu-68 threads the bilayer. Residues Phe-69–Tyr-86 lie on the Intravirion side of the membrane.

Belongs to the herpesviridae glycoprotein N family. In terms of assembly, interacts (via N-terminus) with gM (via N-terminus). The gM-gN heterodimer forms the gCII complex.

The protein resides in the virion membrane. It is found in the host membrane. Its subcellular location is the host Golgi apparatus. The protein localises to the host trans-Golgi network. Its function is as follows. Envelope glycoprotein necessary for proper maturation of gM and modulation of its membrane fusion activity. Also plays a critical role in virion morphogenesis. In Homo sapiens (Human), this protein is Envelope glycoprotein N.